The sequence spans 274 residues: Large ribosomal subunit protein uL2 (274 aa).

A disordered region spans residues 223–258 (VAMNPVDHPHGGGEGRTSGGRHPVTPWGIPTKGYKT).

It belongs to the universal ribosomal protein uL2 family. As to quaternary structure, part of the 50S ribosomal subunit. Forms a bridge to the 30S subunit in the 70S ribosome.

Its function is as follows. One of the primary rRNA binding proteins. Required for association of the 30S and 50S subunits to form the 70S ribosome, for tRNA binding and peptide bond formation. It has been suggested to have peptidyltransferase activity; this is somewhat controversial. Makes several contacts with the 16S rRNA in the 70S ribosome. This Pelobacter propionicus (strain DSM 2379 / NBRC 103807 / OttBd1) protein is Large ribosomal subunit protein uL2.